Reading from the N-terminus, the 586-residue chain is MKYILVTGGVISGIGKGIIASSIGTILKSCGLRVTAIKIDPYINIDAGTFSPYEHGEVFVLNDGGEVDLDLGNYERFLDINLYKDNNITTGKIYQHVINKERRGDYLGKTVQVVPHITDAVQEWVMNQAKVPVDGNKEEPQICVIELGGTIGDIEGMPFVEAFRQFQFKAKRENFCNIHVSLVPQLSATGEQKTKPTQNSVRALRGLGLSPDLIVCRSSTPIEMAVKEKISMFCHVNPEQVICIHDVSSTYRVPVLLEEQSIVKYFKERLHLPIGDSASNLLFKWRNMADRYERLQKICSIALVGKYTKLRDCYASVFKALEHSALAINHKLNLMYIDSIDLEKITETEDPVKFHEAWQKLCKADGILVPGGFGIRGTLGKLQAISWARTKKIPFLGVCLGMQLAVIEFARNCLNLKDADSTEFRPNAPVPLVIDMPEHNPGNLGGTMRLGIRRTVFKTENSILRKLYGDVPFIEERHRHRFEVNPNLIKQFEQNDLSFVGQDVDGDRMEIIELANHPYFVGVQFHPEFSSRPMKPSPPYLGLLLAATGNLNAYLQQGCKLSSSDRYSDASDDSFSEPRIAELEIS.

Residues 300 to 554 (SIALVGKYTK…LAATGNLNAY (255 aa)) enclose the Glutamine amidotransferase type-1 domain. Catalysis depends on for GATase activity residues cysteine 399, histidine 526, and glutamate 528. Positions 563–586 (SSDRYSDASDDSFSEPRIAELEIS) are disordered. Residues serine 568, serine 571, and serine 574 each carry the phosphoserine modification.

This sequence belongs to the CTP synthase family.

The catalysed reaction is UTP + L-glutamine + ATP + H2O = CTP + L-glutamate + ADP + phosphate + 2 H(+). It participates in pyrimidine metabolism; CTP biosynthesis via de novo pathway; CTP from UDP: step 2/2. Its function is as follows. Catalyzes the ATP-dependent amination of UTP to CTP with either L-glutamine or ammonia as the source of nitrogen. Constitutes the rate-limiting enzyme in the synthesis of cytosine nucleotides. In Homo sapiens (Human), this protein is CTP synthase 2 (CTPS2).